A 489-amino-acid chain; its full sequence is UDP-N-acetylmuramate--L-alanine ligase (489 aa).

128-134 (GTHGKTT) serves as a coordination point for ATP.

Belongs to the MurCDEF family.

It localises to the cytoplasm. The catalysed reaction is UDP-N-acetyl-alpha-D-muramate + L-alanine + ATP = UDP-N-acetyl-alpha-D-muramoyl-L-alanine + ADP + phosphate + H(+). It participates in cell wall biogenesis; peptidoglycan biosynthesis. Cell wall formation. This chain is UDP-N-acetylmuramate--L-alanine ligase, found in Shewanella pealeana (strain ATCC 700345 / ANG-SQ1).